We begin with the raw amino-acid sequence, 765 residues long: Probable ATP-dependent RNA helicase DDX27 (765 aa).

The segment at 1–48 (MLSELGFIRTIGEDEDVQVEPETDSEDEEEEGPIVLGRKQKALQKNRS) is disordered. Positions 13 to 32 (EDEDVQVEPETDSEDEEEEG) are enriched in acidic residues. Phosphoserine occurs at positions 25 and 48. Positions 55-57 (FVF) match the Required for interaction with the PEBOW complex motif. Positions 88 to 148 (EKIEKVRKKR…ESETDYSSAD (61 aa)) are disordered. Residues 98–119 (KTEDKEAKSGKSEKEKEAKEGS) show a composition bias toward basic and acidic residues. S135 and S146 each carry phosphoserine. The short motif at 164–169 (KKKKKK) is the Nuclear localization signal element. Residues 187 to 215 (LSFQDMNLSRPLLKAITAMGFKQPTPIQK) carry the Q motif motif. The Helicase ATP-binding domain occupies 218-392 (IPVGLLGKDI…SVSLKNPVRI (175 aa)). ATP is bound at residue 231-238 (AATGTGKT). A DEAD box motif is present at residues 340–343 (DEAD). Residues 426-572 (LLMRTFTDHV…DVILKFRDKI (147 aa)) enclose the Helicase C-terminal domain. Basic residues-rich tracts occupy residues 685-694 (KRNRRAKRAR) and 744-765 (LGLP…KRRK). The interval 685–765 (KRNRRAKRAR…KSKSRYKRRK (81 aa)) is disordered.

Belongs to the DEAD box helicase family. DDX27/DRS1 subfamily. As to quaternary structure, associates with PeBoW complex, composed of BOP1, PES1 and WDR12. Interacts directly with BOP1 and PES1.

The protein localises to the nucleus. It localises to the nucleolus. Its subcellular location is the chromosome. The enzyme catalyses ATP + H2O = ADP + phosphate + H(+). Functionally, probable ATP-dependent RNA helicase. Component of the nucleolar ribosomal RNA (rRNA) processing machinery that regulates 3' end formation of ribosomal 47S rRNA. This Bos taurus (Bovine) protein is Probable ATP-dependent RNA helicase DDX27 (DDX27).